The following is a 458-amino-acid chain: D-inositol 3-phosphate glycosyltransferase (458 aa).

H16 contacts 1D-myo-inositol 3-phosphate. UDP-N-acetyl-alpha-D-glucosamine contacts are provided by residues 22–23 and G30; that span reads QP. 1D-myo-inositol 3-phosphate is bound by residues 27-32, K85, Y118, T142, and R162; that span reads DAGGMN. UDP-N-acetyl-alpha-D-glucosamine-binding residues include R236, K241, and Q302. Mg(2+)-binding residues include Y311, R312, and S314. The UDP-N-acetyl-alpha-D-glucosamine site is built by E324 and E332. Residue T338 coordinates Mg(2+). Residues 428–458 form a disordered region; sequence VAAQNVTGSSSRTRRPWRRRRSTLLPMTGRS. A compositionally biased stretch (basic residues) spans 439–449; it reads RTRRPWRRRRS.

The protein belongs to the glycosyltransferase group 1 family. MshA subfamily. As to quaternary structure, homodimer.

The enzyme catalyses 1D-myo-inositol 3-phosphate + UDP-N-acetyl-alpha-D-glucosamine = 1D-myo-inositol 2-acetamido-2-deoxy-alpha-D-glucopyranoside 3-phosphate + UDP + H(+). In terms of biological role, catalyzes the transfer of a N-acetyl-glucosamine moiety to 1D-myo-inositol 3-phosphate to produce 1D-myo-inositol 2-acetamido-2-deoxy-glucopyranoside 3-phosphate in the mycothiol biosynthesis pathway. The polypeptide is D-inositol 3-phosphate glycosyltransferase (Gordonia bronchialis (strain ATCC 25592 / DSM 43247 / BCRC 13721 / JCM 3198 / KCTC 3076 / NBRC 16047 / NCTC 10667) (Rhodococcus bronchialis)).